The following is a 540-amino-acid chain: Tyrosine-protein kinase transforming protein erbB (540 aa).

Positions F132–L399 constitute a Protein kinase domain. Residues L138 to V146 and K165 each bind ATP. D257 (proton acceptor) is an active-site residue.

This sequence belongs to the protein kinase superfamily. Tyr protein kinase family. EGF receptor subfamily.

The catalysed reaction is L-tyrosyl-[protein] + ATP = O-phospho-L-tyrosyl-[protein] + ADP + H(+). The polypeptide is Tyrosine-protein kinase transforming protein erbB (V-ERBB) (Avian erythroblastosis virus (strain ts167)).